A 222-amino-acid polypeptide reads, in one-letter code: Cytochrome b6 (222 aa).

A helical membrane pass occupies residues Ile-39–Phe-59. Tyr-41 contributes to the heme b binding site. Cys-42 is a binding site for heme c. Heme b contacts are provided by Arg-90, His-93, Arg-94, His-107, and Arg-110. Helical transmembrane passes span Ala-97–Phe-117, Leu-123–Tyr-143, and Leu-193–Ile-213. Positions 194 and 209 each coordinate heme b. Heme c-binding residues include Arg-214 and Ile-218. Ser-219 lines the heme b pocket.

It belongs to the cytochrome b family. PetB subfamily. The 4 large subunits of the cytochrome b6-f complex are cytochrome b6, subunit IV (17 kDa polypeptide, PetD), cytochrome f and the Rieske protein, while the 4 small subunits are PetG, PetL, PetM and PetN. The complex functions as a dimer. It depends on heme b as a cofactor. The cofactor is heme c.

The protein resides in the cellular thylakoid membrane. Its function is as follows. Component of the cytochrome b6-f complex, which mediates electron transfer between photosystem II (PSII) and photosystem I (PSI), cyclic electron flow around PSI, and state transitions. This chain is Cytochrome b6, found in Synechocystis sp. (strain ATCC 27184 / PCC 6803 / Kazusa).